The following is a 252-amino-acid chain: MERVLIVNADDFGLSKGQNYGIVEAYRNGVVTSTTALVNGEAIDHAAQLSRELPALGVGIHFVLTLGKPVSEMPGLTRDGLLGKWIWQMAEEDTLPLDEIAHELACQYQRFIDVFGREPTHLDSHHHVHMFPQIFPIVARFAAQRGIALRIDRQTVLNADDLPSDLRSTQGFSSEFYGEEITEACFLRILDASAHRGEASLEVMCHPAFVDNIIRQSAYCYPRLTELEVLTSASLKAAIAERGYRPGSFLDI.

2 residues coordinate Mg(2+): His61 and His125.

Belongs to the YdjC deacetylase family. ChbG subfamily. Homodimer. The cofactor is Mg(2+).

The protein resides in the cytoplasm. The enzyme catalyses N,N'-diacetylchitobiose + H2O = N-acetyl-beta-D-glucosaminyl-(1-&gt;4)-D-glucosamine + acetate. It catalyses the reaction diacetylchitobiose-6'-phosphate + H2O = N'-monoacetylchitobiose-6'-phosphate + acetate. The protein operates within glycan degradation; chitin degradation. Involved in the degradation of chitin. ChbG is essential for growth on the acetylated chitooligosaccharides chitobiose and chitotriose but is dispensable for growth on cellobiose and chitosan dimer, the deacetylated form of chitobiose. Deacetylation of chitobiose-6-P and chitotriose-6-P is necessary for both the activation of the chb promoter by the regulatory protein ChbR and the hydrolysis of phosphorylated beta-glucosides by the phospho-beta-glucosidase ChbF. Catalyzes the removal of only one acetyl group from chitobiose-6-P to yield monoacetylchitobiose-6-P, the inducer of ChbR and the substrate of ChbF. In Salmonella paratyphi B (strain ATCC BAA-1250 / SPB7), this protein is Chitooligosaccharide deacetylase.